The sequence spans 158 residues: MRVGIGYDVHKLVDGRDLIIGGEKIPFEKGLLGHSDADVLCHAIGDSILGAAALGDIGRHFPDTDNRYKGYSSLKLLEEIKRIINEKGYYITNIDSTIIAQKPKMLAYINNMRKNISKVLDISIEDINIKATTEEELGFTGKQLGIKAQSICLLNKNI.

2 residues coordinate a divalent metal cation: Asp8 and His10. 4-CDP-2-C-methyl-D-erythritol 2-phosphate contacts are provided by residues 8 to 10 (DVH) and 34 to 35 (HS). Residue His42 participates in a divalent metal cation binding. 4-CDP-2-C-methyl-D-erythritol 2-phosphate is bound by residues 56 to 58 (DIG), 61 to 65 (FPDTD), 100 to 106 (AQKPKML), 132 to 135 (TTEE), Phe139, and Lys142.

The protein belongs to the IspF family. In terms of assembly, homotrimer. A divalent metal cation serves as cofactor.

The enzyme catalyses 4-CDP-2-C-methyl-D-erythritol 2-phosphate = 2-C-methyl-D-erythritol 2,4-cyclic diphosphate + CMP. Its pathway is isoprenoid biosynthesis; isopentenyl diphosphate biosynthesis via DXP pathway; isopentenyl diphosphate from 1-deoxy-D-xylulose 5-phosphate: step 4/6. In terms of biological role, involved in the biosynthesis of isopentenyl diphosphate (IPP) and dimethylallyl diphosphate (DMAPP), two major building blocks of isoprenoid compounds. Catalyzes the conversion of 4-diphosphocytidyl-2-C-methyl-D-erythritol 2-phosphate (CDP-ME2P) to 2-C-methyl-D-erythritol 2,4-cyclodiphosphate (ME-CPP) with a corresponding release of cytidine 5-monophosphate (CMP). The sequence is that of 2-C-methyl-D-erythritol 2,4-cyclodiphosphate synthase from Clostridium tetani (strain Massachusetts / E88).